Here is a 626-residue protein sequence, read N- to C-terminus: Janus kinase and microtubule-interacting protein 1 (626 aa).

The segment at 1-22 (MSKKGRSKGEKPEMETDAVQMA) is disordered. Residues 1 to 365 (MSKKGRSKGE…KIKNLTRENV (365 aa)) form a mediates association with microtubules region. Coiled coils occupy residues 19-255 (VQMA…EAER) and 284-413 (ERDV…DDLS). Residues 365–626 (VEMKEKLSAQ…ILFEPKLKFM (262 aa)) are mediates interaction with TYK2 and GABBR1. S382 is subject to Phosphoserine. Polar residues predominate over residues 452–461 (ETLSETSYNT). The disordered stretch occupies residues 452–477 (ETLSETSYNTDRTDRTPATPEEDLDD). Residue T470 is modified to Phosphothreonine. Positions 490-604 (QLTREYQALQ…EFRVLELEVR (115 aa)) form a coiled coil.

The protein belongs to the JAKMIP family. As to quaternary structure, homodimer. Forms a complex with GABBR1 and KIF5B/kinesin-1. Interacts with JAK1 and TYK2. Predominantly expressed in neural tissues and lymphoid cells (at protein level). Isoform 2, isoform 3 and isoform 4 are specifically expressed in brain and retina. Isoform 1 and isoform 5 are also detected in liver, lung and skeletal muscle. Also detected in testis and to a lower extent spleen and intestine.

Its subcellular location is the cytoplasm. It is found in the cytoskeleton. The protein localises to the membrane. Associates with microtubules and may play a role in the microtubule-dependent transport of the GABA-B receptor. May play a role in JAK1 signaling and regulate microtubule cytoskeleton rearrangements. The polypeptide is Janus kinase and microtubule-interacting protein 1 (JAKMIP1) (Homo sapiens (Human)).